The chain runs to 912 residues: Protein translocase subunit SecA (912 aa).

ATP is bound by residues Q87, 105-109, and D508; that span reads GEGKT. The interval 865-912 is disordered; the sequence is DEEAAQVQSGNAPLPVSQVTRDEPKVGRNDPCPCGSGKKYKHCHGQLS. The Zn(2+) site is built by C896, C898, C907, and H908. Positions 902–912 are enriched in basic residues; sequence KKYKHCHGQLS.

The protein belongs to the SecA family. Monomer and homodimer. Part of the essential Sec protein translocation apparatus which comprises SecA, SecYEG and auxiliary proteins SecDF-YajC and YidC. Zn(2+) serves as cofactor.

Its subcellular location is the cell inner membrane. The protein localises to the cytoplasm. The enzyme catalyses ATP + H2O + cellular proteinSide 1 = ADP + phosphate + cellular proteinSide 2.. In terms of biological role, part of the Sec protein translocase complex. Interacts with the SecYEG preprotein conducting channel. Has a central role in coupling the hydrolysis of ATP to the transfer of proteins into and across the cell membrane, serving both as a receptor for the preprotein-SecB complex and as an ATP-driven molecular motor driving the stepwise translocation of polypeptide chains across the membrane. This Xanthomonas oryzae pv. oryzae (strain PXO99A) protein is Protein translocase subunit SecA.